The chain runs to 59 residues: Large ribosomal subunit protein uL30 (59 aa).

This sequence belongs to the universal ribosomal protein uL30 family. As to quaternary structure, part of the 50S ribosomal subunit.

The chain is Large ribosomal subunit protein uL30 from Brachyspira hyodysenteriae (strain ATCC 49526 / WA1).